The primary structure comprises 280 residues: MGAWISRTRVPTPEPDPQEVLDLSRLPPELLLLVLSHVPPRTLLMHCRRVCRAWRALVDGQALWLLLLARDHSAAGRALLTLARRCLPPAHEDTPCPLGQFCALRPLGRNLISNPCGQEGLRKWMVRHGGDGWVVEKNRKPVPGAPSQTCFVTSFSWCRKKQVVDLVEKGLWPELLDSGGVEIAVSDWWGARHDSGCKYRLFVTLLDAHQNVIDKFSAVPDPIEQWNNDIYLQVTHVFSGIRRGIRFVSFEHWGQDTQFWAGHYGARVTNSSVIIRVCQS.

One can recognise an F-box domain in the interval 20-67; the sequence is VLDLSRLPPELLLLVLSHVPPRTLLMHCRRVCRAWRALVDGQALWLLL. Residues 101-277 enclose the FBA domain; that stretch reads FCALRPLGRN…VTNSSVIIRV (177 aa).

In terms of assembly, part of a SCF (SKP1-cullin-F-box) protein ligase complex. Interacts with SKP1 and CUL1. As to expression, detected in brain, heart and muscle.

Substrate-recognition component of the SCF (SKP1-CUL1-F-box protein)-type E3 ubiquitin ligase complex. Able to recognize and bind complex-type oligosaccharides. In Mus musculus (Mouse), this protein is F-box only protein 27 (Fbxo27).